The chain runs to 736 residues: uncharacterized protein (736 aa).

ABC transporter domains lie at 183-459 (IKID…KQME) and 518-734 (LQMS…TMTI). ATP contacts are provided by residues 215-222 (GRNGIGKS) and 551-558 (GPNGAGKS).

It belongs to the ABC transporter superfamily.

It localises to the cytoplasm. This is an uncharacterized protein from Schizosaccharomyces pombe (strain 972 / ATCC 24843) (Fission yeast).